The following is a 339-amino-acid chain: Ferredoxin--NADP reductase (339 aa).

FAD-binding residues include glutamate 35, glutamine 43, tyrosine 48, valine 88, phenylalanine 122, aspartate 287, and serine 327.

Belongs to the ferredoxin--NADP reductase type 2 family. Homodimer. It depends on FAD as a cofactor.

It carries out the reaction 2 reduced [2Fe-2S]-[ferredoxin] + NADP(+) + H(+) = 2 oxidized [2Fe-2S]-[ferredoxin] + NADPH. The polypeptide is Ferredoxin--NADP reductase (Leuconostoc citreum (strain KM20)).